The sequence spans 516 residues: GMP synthase [glutamine-hydrolyzing] (516 aa).

Positions 6–199 (KVLILDFGSQ…LFEIAGLTSG (194 aa)) constitute a Glutamine amidotransferase type-1 domain. The active-site Nucleophile is the Cys-83. Catalysis depends on residues His-173 and Glu-175. A GMPS ATP-PPase domain is found at 200–391 (WTMSSFLETE…LGMPDFIIWR (192 aa)). Residue 227 to 233 (SGGVDST) coordinates ATP.

In terms of assembly, homodimer.

It catalyses the reaction XMP + L-glutamine + ATP + H2O = GMP + L-glutamate + AMP + diphosphate + 2 H(+). It participates in purine metabolism; GMP biosynthesis; GMP from XMP (L-Gln route): step 1/1. Its function is as follows. Catalyzes the synthesis of GMP from XMP. This chain is GMP synthase [glutamine-hydrolyzing], found in Solidesulfovibrio magneticus (strain ATCC 700980 / DSM 13731 / RS-1) (Desulfovibrio magneticus).